A 662-amino-acid polypeptide reads, in one-letter code: MAPKRKQPYTEEGIDFKFTQFQIVPPINQKNFYTEYLKRDDQMYIWRDSAGEKDAKETESESANGDTKQDDSKKSQVEEEEDGIEESELGEEKDNKTIVLHIGSQNLRIGLASNKTPTTVPMVIARKMRAPFAQERCLLKDICHVNEDGNVAFDSEFDSNLKLLDSELKSWLKAQKKRSVPNGTQLVKNYNKISKPETVPPDDDPEKPDWIHFEQDDHVDVICGKEAFLLPLNEYPEYKLFYPIKSGVFNESDYASSQQLLADIYEIFKYSITSLLQIPVSQLSQYSVIFIVPDLYDRVYVEKILDILFFDLHFGKAAIVQESLCTSFGAGMSAACVVDMGAQKTSISCVEEGVVVPNSRIKINYGGDDITLLFMKLLMRSHFPYQDIDLKTPYDWSLANALKIKYCGLSEATYNVQLNSFFSRTPDKGTRKFTFKSLDETMLAPLGFFRPDIFENENKLHDRYTLFPVPVDVYDNQPNNPESLAQTTLLQISTPISNIKANGKDDEEKKEESDLVTPSVKFKPPRVVYCGSLAAPEIKNEKLIYPLDDAINQSIFSACDGNLSDEKAKNLYSSILIVGGAGQFPGFAHLLEERIHSKRANIPTISVIPPPRSMDAQFVAWKGACIYNRIRIVSELWIKNSDWKMLGSRVLQYKTLGYFWTG.

2 stretches are compositionally biased toward basic and acidic residues: residues 50–59 (AGEKDAKETE) and 67–77 (TKQDDSKKSQV). The interval 50–92 (AGEKDAKETESESANGDTKQDDSKKSQVEEEEDGIEESELGEE) is disordered. Over residues 78–89 (EEEEDGIEESEL) the composition is skewed to acidic residues. 339–342 (DMGA) serves as a coordination point for ATP.

The protein belongs to the actin family. In terms of assembly, component of the chromatin remodeling Ino80 complex. Exists as monomers and dimers, but the dimer is most probably the biologically relevant form required for stable interactions with histones that exploits the twofold symmetry of the nucleosome core.

It is found in the nucleus. Its function is as follows. Probably involved in transcription regulation via its interaction with the INO80 complex, a chromatin remodeling complex. Exhibits low basal ATPase activity, and unable to polymerize. Strongly prefer nucleosomes and H3-H4 tetramers over H2A-H2B dimers, suggesting it may act as a nucleosome recognition module within the complex. This chain is Probable actin-related protein 8, found in Schizosaccharomyces pombe (strain 972 / ATCC 24843) (Fission yeast).